The sequence spans 274 residues: S-methyl-5'-thioadenosine phosphorylase (274 aa).

Phosphate is bound by residues serine 20, 62 to 63, and 95 to 96; these read RH and SA. Methionine 194 contacts substrate. Residue threonine 195 coordinates phosphate. 218 to 220 contributes to the substrate binding site; sequence DYD.

The protein belongs to the PNP/MTAP phosphorylase family. MTAP subfamily. Homohexamer. Dimer of a homotrimer.

The enzyme catalyses S-methyl-5'-thioadenosine + phosphate = 5-(methylsulfanyl)-alpha-D-ribose 1-phosphate + adenine. It functions in the pathway amino-acid biosynthesis; L-methionine biosynthesis via salvage pathway; S-methyl-5-thio-alpha-D-ribose 1-phosphate from S-methyl-5'-thioadenosine (phosphorylase route): step 1/1. Catalyzes the reversible phosphorylation of S-methyl-5'-thioadenosine (MTA) to adenine and 5-methylthioribose-1-phosphate. Involved in the breakdown of MTA, a major by-product of polyamine biosynthesis. Responsible for the first step in the methionine salvage pathway after MTA has been generated from S-adenosylmethionine. Has broad substrate specificity with 6-aminopurine nucleosides as preferred substrates. This chain is S-methyl-5'-thioadenosine phosphorylase, found in Hyperthermus butylicus (strain DSM 5456 / JCM 9403 / PLM1-5).